Consider the following 460-residue polypeptide: Argininosuccinate lyase (460 aa).

This sequence belongs to the lyase 1 family. Argininosuccinate lyase subfamily.

It localises to the cytoplasm. The catalysed reaction is 2-(N(omega)-L-arginino)succinate = fumarate + L-arginine. The protein operates within amino-acid biosynthesis; L-arginine biosynthesis; L-arginine from L-ornithine and carbamoyl phosphate: step 3/3. This is Argininosuccinate lyase from Alteromonas mediterranea (strain DSM 17117 / CIP 110805 / LMG 28347 / Deep ecotype).